A 359-amino-acid chain; its full sequence is DNA replication and repair protein RecF (359 aa).

30–37 is an ATP binding site; it reads GPNGSGKT.

Belongs to the RecF family.

It localises to the cytoplasm. In terms of biological role, the RecF protein is involved in DNA metabolism; it is required for DNA replication and normal SOS inducibility. RecF binds preferentially to single-stranded, linear DNA. It also seems to bind ATP. This is DNA replication and repair protein RecF from Aliivibrio fischeri (strain ATCC 700601 / ES114) (Vibrio fischeri).